Here is a 469-residue protein sequence, read N- to C-terminus: UDP-N-acetylmuramoylalanine--D-glutamate ligase (469 aa).

123–129 is a binding site for ATP; it reads GTNGKST.

It belongs to the MurCDEF family.

The protein localises to the cytoplasm. It carries out the reaction UDP-N-acetyl-alpha-D-muramoyl-L-alanine + D-glutamate + ATP = UDP-N-acetyl-alpha-D-muramoyl-L-alanyl-D-glutamate + ADP + phosphate + H(+). The protein operates within cell wall biogenesis; peptidoglycan biosynthesis. In terms of biological role, cell wall formation. Catalyzes the addition of glutamate to the nucleotide precursor UDP-N-acetylmuramoyl-L-alanine (UMA). In Caulobacter sp. (strain K31), this protein is UDP-N-acetylmuramoylalanine--D-glutamate ligase.